Reading from the N-terminus, the 319-residue chain is Sphingomyelinase D (319 aa).

The first 23 residues, 1–23 (MTPLLRTICAILCILIAVPLTFA), serve as a signal peptide directing secretion. His44 is a catalytic residue. 3 residues coordinate Mg(2+): Glu64, Asp66, and Asp109. An SMD-tail motif is present at residues 312–319 (ATGADKPW).

Belongs to the sphingomyelinase D/phospholipase D family. Mg(2+) is required as a cofactor.

Its subcellular location is the secreted. It catalyses the reaction a sphingomyelin + H2O = an N-acylsphing-4-enine 1-phosphate + choline + H(+). Its function is as follows. Catalyzes the hydrolysis of sphingomyelin. Sphingomyelinases D are produced by some spider in their venoms, but also by arthropods such as ticks, or pathogenic bacteria and fungi. They might play a role in pathogenicity through different mechanisms, such as membrane destabilization and host cell penetration, but also pulmonary inflammation and cutaneous lesions. This is Sphingomyelinase D from Ajellomyces capsulatus (strain G186AR / H82 / ATCC MYA-2454 / RMSCC 2432) (Darling's disease fungus).